A 346-amino-acid chain; its full sequence is Low specificity L-threonine aldolase (346 aa).

Lys207 is modified (N6-(pyridoxal phosphate)lysine).

Belongs to the threonine aldolase family. In terms of assembly, homotetramer. The cofactor is pyridoxal 5'-phosphate.

It carries out the reaction L-threonine = acetaldehyde + glycine. The enzyme catalyses L-allo-threonine = acetaldehyde + glycine. Its function is as follows. Catalyzes the cleavage of L-allo-threonine and L-threonine to glycine and acetaldehyde. This chain is Low specificity L-threonine aldolase (ltaE), found in Pseudomonas aeruginosa (strain ATCC 15692 / DSM 22644 / CIP 104116 / JCM 14847 / LMG 12228 / 1C / PRS 101 / PAO1).